Here is a 396-residue protein sequence, read N- to C-terminus: Probable sugar efflux transporter (396 aa).

12 helical membrane-spanning segments follow: residues 15-35, 50-70, 81-101, 103-123, 136-156, 170-190, 209-229, 246-266, 275-295, 299-319, 333-353, and 364-384; these read VVTL…PVGL, VGIM…PFML, LICL…SWSF, VLVI…SITA, AQAL…GLPL, FFAI…LLPL, PALM…YTAY, FATA…VIFG, ALVS…LPAA, IHLG…GLGM, VAMA…ALVG, and MIGY…IIIF.

Belongs to the major facilitator superfamily. SotB (TC 2.A.1.2) family.

Its subcellular location is the cell inner membrane. Functionally, involved in the efflux of sugars. The physiological role may be the reduction of the intracellular concentration of toxic sugars or sugar metabolites. The protein is Probable sugar efflux transporter of Escherichia coli O127:H6 (strain E2348/69 / EPEC).